Reading from the N-terminus, the 235-residue chain is Triosephosphate isomerase (235 aa).

7-9 is a binding site for substrate; that stretch reads NFK. Catalysis depends on His-92, which acts as the Electrophile. Glu-161 functions as the Proton acceptor in the catalytic mechanism. Gly-167 and Ser-197 together coordinate substrate.

This sequence belongs to the triosephosphate isomerase family. In terms of assembly, homodimer.

The protein localises to the cytoplasm. The catalysed reaction is D-glyceraldehyde 3-phosphate = dihydroxyacetone phosphate. Its pathway is carbohydrate biosynthesis; gluconeogenesis. The protein operates within carbohydrate degradation; glycolysis; D-glyceraldehyde 3-phosphate from glycerone phosphate: step 1/1. In terms of biological role, involved in the gluconeogenesis. Catalyzes stereospecifically the conversion of dihydroxyacetone phosphate (DHAP) to D-glyceraldehyde-3-phosphate (G3P). The protein is Triosephosphate isomerase of Helicobacter hepaticus (strain ATCC 51449 / 3B1).